A 173-amino-acid polypeptide reads, in one-letter code: Regulator of ribonuclease activity A (173 aa).

Belongs to the RraA family. In terms of assembly, homotrimer. Binds to both RNA-binding sites in the C-terminal region of Rne and to RhlB.

It localises to the cytoplasm. Globally modulates RNA abundance by binding to RNase E (Rne) and regulating its endonucleolytic activity. Can modulate Rne action in a substrate-dependent manner by altering the composition of the degradosome. Modulates RNA-binding and helicase activities of the degradosome. The sequence is that of Regulator of ribonuclease activity A from Vibrio vulnificus (strain CMCP6).